A 288-amino-acid polypeptide reads, in one-letter code: ATP synthase gamma chain (288 aa).

It belongs to the ATPase gamma chain family. F-type ATPases have 2 components, CF(1) - the catalytic core - and CF(0) - the membrane proton channel. CF(1) has five subunits: alpha(3), beta(3), gamma(1), delta(1), epsilon(1). CF(0) has three main subunits: a, b and c.

It is found in the cell inner membrane. Its function is as follows. Produces ATP from ADP in the presence of a proton gradient across the membrane. The gamma chain is believed to be important in regulating ATPase activity and the flow of protons through the CF(0) complex. In Vibrio vulnificus (strain CMCP6), this protein is ATP synthase gamma chain.